Consider the following 183-residue polypeptide: MNNTILPRNFYERPTLTVAGELLGKMLKFSNFSGIITEVEAYIGMDDPACHAARGYTNRTSVMFGTPGFSYVYFIYGMYYCLNIVTEAEGFPAAVLIRGLKLTEPLEANLGGPGILCKKLNITKEHNKQDLTISHEFCLYEYHLKPDYVCTPRIGISKGKEKFWRFKSCVLADMPKITLNNKY.

The protein belongs to the DNA glycosylase MPG family.

In Wolbachia pipientis subsp. Culex pipiens (strain wPip), this protein is Putative 3-methyladenine DNA glycosylase.